The following is a 533-amino-acid chain: WD repeat-containing protein JIP5 (533 aa).

WD repeat units follow at residues 26 to 67, 84 to 130, 176 to 215, 264 to 309, and 372 to 409; these read NYSD…EKQS, GKVS…GSCR, NSND…GSKL, NQDD…FMDQ, and GAAD…EIAL. Composition is skewed to acidic residues over residues 408-428 and 437-452; these read ALDE…EDDL and ASDE…EDEK. Residues 408–533 are disordered; the sequence is ALDESDDSDD…EHGIRRFDDL (126 aa). Composition is skewed to basic and acidic residues over residues 453–463 and 521–533; these read EDKPVKIDHPL and QKHE…FDDL.

The protein belongs to the WD repeat WDR55 family.

The protein resides in the nucleus. Its subcellular location is the nucleolus. This is WD repeat-containing protein JIP5 (JIP5) from Scheffersomyces stipitis (strain ATCC 58785 / CBS 6054 / NBRC 10063 / NRRL Y-11545) (Yeast).